The sequence spans 414 residues: Isocitrate dehydrogenase [NADP] cytoplasmic (414 aa).

Ser2 carries the N-acetylserine modification. A Phosphotyrosine modification is found at Tyr42. Thr75–Thr77 contributes to the NADP(+) binding site. Thr77 lines the substrate pocket. The residue at position 81 (Lys81) is an N6-acetyllysine. NADP(+) is bound at residue Arg82. Substrate-binding positions include Ser94–Arg100 and Arg109. Lys126 carries the post-translational modification N6-succinyllysine. Substrate contacts are provided by Arg132 and Lys212. An N6-acetyllysine mark is found at Lys224, Lys233, and Lys243. Asp252 is a Mn(2+) binding site. NADP(+) is bound at residue Lys260. Residues Asp275 and Asp279 each coordinate Mn(2+). An NADP(+)-binding site is contributed by Gly310 to His315. The residue at position 321 (Lys321) is an N6-acetyllysine. Position 328 (Asn328) interacts with NADP(+). Ser389 carries the post-translational modification Phosphoserine. An N6-succinyllysine modification is found at Lys400.

It belongs to the isocitrate and isopropylmalate dehydrogenases family. Homodimer. Mg(2+) is required as a cofactor. It depends on Mn(2+) as a cofactor. Post-translationally, acetylation at Lys-374 dramatically reduces catalytic activity. As to expression, highly expressed in the liver followed by kidney, lower expression in spleen, brain and lung.

The protein resides in the cytoplasm. It localises to the cytosol. It carries out the reaction D-threo-isocitrate + NADP(+) = 2-oxoglutarate + CO2 + NADPH. Its activity is regulated as follows. Irreversibly inhibited by Cd(2+) concentrations above 50 uM. Its function is as follows. Catalyzes the NADP(+)-dependent oxidative decarboxylation of isocitrate (D-threo-isocitrate) to 2-ketoglutarate (2-oxoglutarate), which is required by other enzymes such as the phytanoyl-CoA dioxygenase. Plays a critical role in the generation of NADPH, an important cofactor in many biosynthesis pathways. May act as a corneal epithelial crystallin and may be involved in maintaining corneal epithelial transparency. In Mus musculus (Mouse), this protein is Isocitrate dehydrogenase [NADP] cytoplasmic (Idh1).